Here is a 241-residue protein sequence, read N- to C-terminus: Endodeoxyribonuclease NucC (241 aa).

Active-site residues include aspartate 73, glutamate 104, and lysine 106. Positions 73 and 104 each coordinate Mg(2+).

Belongs to the NucC endonuclease family. In terms of assembly, self-oligomerizes. Forms homotrimers; in the presence of cAAA the trimers associate face-to-face to form homohexamers. The 2 cAAA-binding sites are on the exterior of the hexamer at the three-way junction, there are maximally 2 cyclic nucleotides per hexamer. Requires Mg(2+) as cofactor.

With respect to regulation, activated by cAAA and to a lesser extent cAA and cAAG; cAAA and cAA are products of its cognate CD-NTase. Cyclic nucleotide binding causes hexamerization. Cyclic nucleotide binding causes a series of shifts that enclose the cAAA molecule, enable hexamer formation and juxtapose pairs of active sites to allow dsDNA cleavage. Effector DNase of a CBASS antivirus system. CBASS (cyclic oligonucleotide-based antiphage signaling system) provides immunity against bacteriophage. The CD-NTase protein synthesizes cyclic nucleotides in response to infection; these serve as specific second messenger signals. The signals activate a diverse range of effectors, leading to bacterial cell death and thus abortive phage infection. A type III-C(AAA) CBASS system. In terms of biological role, a cyclic nucleotide-activated dsDNase. In the presence of 3',3',3'-cyclic AMP-AMP-AMP (cAAA), and to a lesser extent 3',3',3'-cyclic AMP-AMP-GMP (cAAG) and cyclic-di-AMP (c-di-AMP), endonucleolytically degrades dsDNA. Binds one cAAA in a pocket on one surface of the trimer; cAAA binding promotes hexamerization, which is necessary for nuclease activation. Also binds c-diAMP or linear di-AMP with lower affinity. The nuclease digests dsDNA to about 50 bp lengths with a 2-base 3' overhang and a consensus recognition site of 5'-Axx|T-3'. DNA has been modeled to contact a pair of juxtaposed active sites (one from each layer of the hexamer), accounting for cleavage on both strands and the 2-base overhang. Functionally, protects E.coli strain JP313 against bacteriophage lambda cI- infection. When the cdnC-cap7-cap6-nucC operon is transformed into a susceptible strain it confers bacteriophage immunity. Mutations in the sensor (Cap7 also called HORMA) or effector proteins (CdnC, NucC) but not the disassembly protein (Cap6 also called Trip13) no longer confer immunity. The presence of the intact operon leads to culture collapse and cell death which occurs before the phage has finished its replication cycle, thus protecting non-infected bacteria by aborting the phage infection and preventing its propagation. This is Endodeoxyribonuclease NucC from Escherichia coli (strain MS 115-1).